The following is a 199-amino-acid chain: MSEILDLEAKPRTEFGTGAARALRREGRVPAIIYGAGKTPVSISLEEKAITKYYRKPAFISQLINVTIDQKQYKVLPKAVELHPVTDMVRHVDFVFLEAKTQKMEVPIVYEGKERALGVKRGGYFNIVKRRVTLLCDVNNIPRNVTIDVTNMPIATSLKSSKIELPKGCSFVTKKEFVLATIIGRRGAKTEAEAPEVGK.

This sequence belongs to the bacterial ribosomal protein bL25 family. CTC subfamily. Part of the 50S ribosomal subunit; part of the 5S rRNA/L5/L18/L25 subcomplex. Contacts the 5S rRNA. Binds to the 5S rRNA independently of L5 and L18.

Its function is as follows. This is one of the proteins that binds to the 5S RNA in the ribosome where it forms part of the central protuberance. The protein is Large ribosomal subunit protein bL25 of Rickettsia akari (strain Hartford).